The sequence spans 61 residues: Small ribosomal subunit protein uS14 (61 aa).

Residues C24, C27, C40, and C43 each contribute to the Zn(2+) site.

This sequence belongs to the universal ribosomal protein uS14 family. Zinc-binding uS14 subfamily. Part of the 30S ribosomal subunit. Contacts proteins S3 and S10. The cofactor is Zn(2+).

Functionally, binds 16S rRNA, required for the assembly of 30S particles and may also be responsible for determining the conformation of the 16S rRNA at the A site. The sequence is that of Small ribosomal subunit protein uS14 from Campylobacter fetus subsp. fetus (strain 82-40).